Consider the following 324-residue polypeptide: Dioxygenase tasH (324 aa).

Positions methionine 1–alanine 25 are cleaved as a signal peptide. Zn(2+)-binding residues include histidine 50, histidine 96, and histidine 284.

Belongs to the DODA-type extradiol aromatic ring-opening dioxygenase family. As to quaternary structure, monomer. Zn(2+) is required as a cofactor.

Dioxygenase; part of the gene cluster that mediates the biosynthesis of the tetramic acids Sch210971 and Sch210972, potential anti-HIV fungal natural product that contain a decalin core. The PKS module of tasS together with the enoylreductase tasC catalyze the formation of the polyketide unit which is then conjugated to 4-hydroxyl-4-methyl glutamate (HMG) by the condensation domain of the tasS NRPS module. One unique structural feature of Sch210971 and Sch210972 is the tetramic acid motif proposed to be derived from the non-proteinogenic amino acid HMG, by a Dieckmann-type condensation catalyzed by the reductase domain of tasS. The aldolase tasA catalyzes the aldol condensation of 2 molecules of pyruvic acid to yield the intermediate 4-hydroxyl-4-methyl-2-oxoglutarate (HMOG), which can then be stereoselectively transaminated, may be by tasG, to form HMG. The Diels-Alderase tas3 then uses the Dieckmann product of tasS as substrate and catalyzes the Diels-Alder cycloaddition to form the decalin ring of Sch210971 and Sch210972. The sequence is that of Dioxygenase tasH from Hapsidospora irregularis.